Consider the following 710-residue polypeptide: Nucleolin (710 aa).

A disordered region spans residues 1–303 (MVKLAKAGKN…KKQKVEGTEP (303 aa)). 3 positions are modified to N6-acetyllysine: K9, K15, and K16. Residues 24-43 (VEEDSEDEEMSEDEEDDSSG) are compositionally biased toward acidic residues. Phosphoserine is present on residues S28, S34, S41, and S42. Residues 56 to 107 (AAATSAKKVVVSPTKKVAVATPAKKAAVTPGKKAAATPAKKTVTPAKAVTTP) are compositionally biased toward low complexity. The stretch at 58–65 (ATSAKKVV) is repeat 1. The segment at 58–135 (ATSAKKVVVS…GAAIPAKGAK (78 aa)) is 8 X 8 AA tandem repeats of X-T-P-X-K-K-X-X. S67 bears the Phosphoserine mark. A phosphothreonine mark is found at T69, T76, T84, and T92. Repeat copies occupy residues 75–82 (ATPAKKAA), 83–90 (VTPGKKAA), and 91–98 (ATPAKKTV). K96 bears the N6-acetyllysine mark. T99 carries the post-translational modification Phosphothreonine. The stretch at 99–104 (TPAKAV) is one 5; truncated repeat. At K102 the chain carries N6-acetyllysine. Repeat unit 6 spans residues 105 to 112 (TTPGKKGA). The residue at position 106 (T106) is a Phosphothreonine. Residue K109 is modified to N6-acetyllysine. Residue T113 is modified to Phosphothreonine. At K116 the chain carries N6-acetyllysine. Tandem repeats lie at residues 120-127 (ATPGKKGA) and 128-135 (AIPAKGAK). T121 is modified (phosphothreonine). A compositionally biased stretch (low complexity) spans 122–137 (PGKKGAAIPAKGAKNG). Position 124 is an N6-acetyllysine (K124). S145 and S153 each carry phosphoserine. Residues 145–171 (SDEEEDDDSEEDEEDDEDEDEDEDEIE) show a composition bias toward acidic residues. The span at 172 to 183 (PAAMKAAAAAPA) shows a compositional bias: low complexity. Phosphoserine is present on residues S184 and S206. Residues 184–211 (SEDEDDEDDEDDEDDDDDEEDDSEEEAM) are compositionally biased toward acidic residues. T214 carries the phosphothreonine modification. Positions 234–272 (EDEDEEEDDEDEDDDDDEDDEDDDDEDDEEEEEEEEEEP) are enriched in acidic residues. Residues 273–300 (VKEAPGKRKKEMAKQKAAPEAKKQKVEG) show a composition bias toward basic and acidic residues. A Glycyl lysine isopeptide (Lys-Gly) (interchain with G-Cter in SUMO1); alternate cross-link involves residue K297. K297 is covalently cross-linked (Glycyl lysine isopeptide (Lys-Gly) (interchain with G-Cter in SUMO2); alternate). A Phosphothreonine modification is found at T301. RRM domains lie at 307-383 (FNLF…KPKG) and 393-466 (RTLL…YTGE). K318 bears the N6-acetyllysine mark. K324 participates in a covalent cross-link: Glycyl lysine isopeptide (Lys-Gly) (interchain with G-Cter in SUMO1); alternate. K324 participates in a covalent cross-link: Glycyl lysine isopeptide (Lys-Gly) (interchain with G-Cter in SUMO2); alternate. Position 348 is an N6-acetyllysine (K348). The residue at position 356 (S356) is a Phosphoserine. The residue at position 367 (T367) is a Phosphothreonine. K370 participates in a covalent cross-link: Glycyl lysine isopeptide (Lys-Gly) (interchain with G-Cter in SUMO2). A Glycyl lysine isopeptide (Lys-Gly) (interchain with G-Cter in SUMO2); alternate cross-link involves residue K377. K377 is subject to N6-acetyllysine; alternate. An N6-acetyllysine mark is found at K398 and K403. T405 bears the Phosphothreonine mark. N6-acetyllysine is present on residues K427 and K444. Phosphoserine is present on residues S458 and S460. N6-acetyllysine is present on residues K467 and K477. The RRM 3 domain maps to 486–560 (KTLVLSNLSY…RAIRLELQGP (75 aa)). K513 participates in a covalent cross-link: Glycyl lysine isopeptide (Lys-Gly) (interchain with G-Cter in SUMO2); alternate. K513 carries the N6-acetyllysine; alternate modification. K521 is subject to N6-acetyllysine. The residue at position 563 (S563) is a Phosphoserine. At K572 the chain carries N6-acetyllysine. An RRM 4 domain is found at 572–647 (KTLFVKGLSE…NKVTLDWAKP (76 aa)). Residue K577 forms a Glycyl lysine isopeptide (Lys-Gly) (interchain with G-Cter in SUMO2); alternate linkage. K577 carries the post-translational modification N6-acetyllysine; alternate. S580 carries the post-translational modification Phosphoserine. K589 is covalently cross-linked (Glycyl lysine isopeptide (Lys-Gly) (interchain with G-Cter in SUMO1); alternate). K589 participates in a covalent cross-link: Glycyl lysine isopeptide (Lys-Gly) (interchain with G-Cter in SUMO2); alternate. Phosphoserine is present on residues S591 and S619. Residue K624 forms a Glycyl lysine isopeptide (Lys-Gly) (interchain with G-Cter in SUMO2) linkage. Residues 640–710 (VTLDWAKPKG…KPQGKKTKFE (71 aa)) form a disordered region. K646 is modified (N6-acetyllysine). Gly residues predominate over residues 650–696 (EGGFGGRGGGRGGFGGRGGGRGGRGGFGGRGRGGFGGRGGFRGGRGG). 9 positions are modified to asymmetric dimethylarginine: R656, R660, R666, R670, R673, R679, R681, R687, and R691. R694 carries the post-translational modification Asymmetric dimethylarginine; alternate. R694 bears the Omega-N-methylarginine; alternate mark. Over residues 697 to 710 (GGDHKPQGKKTKFE) the composition is skewed to basic and acidic residues.

As to quaternary structure, identified in a IGF2BP1-dependent mRNP granule complex containing untranslated mRNAs. Component of the SWAP complex that consists of NPM1, NCL/nucleolin, PARP1 and SWAP70. Component of a complex which is at least composed of HTATSF1/Tat-SF1, the P-TEFb complex components CDK9 and CCNT1, RNA polymerase II, SUPT5H, and NCL/nucleolin. Interacts with AICDA. Interacts with APTX. Interacts with C1QBP. Interacts with ERBB4. Interacts (via C-terminus) with FMR1 isoform 6 (via N-terminus). Interacts with GZF1; this interaction is important for nucleolar localization of GZF1. Interacts with NSUN2. Interacts with NVL. Interacts (via N-terminus domain) with SETX. Interacts (via RRM1 and C-terminal RRM4/Arg/Gly-rich domains) with TERT; the interaction is important for nucleolar localization of TERT. Interacts with WDR46. Interacts with ZFP36. Interacts with LRRC34. Interacts with RRP1B. Interacts with HNRNPU; this interaction occurs during mitosis. Interacts with RIOK1; RIOK1 recruits NCL to PRMT5 for symmetrically methylation. Interacts with ZBTB7B. Interacts with MDK; this interaction promotes NCL clustering and lateral movements of this complex into lipid rafts leading to MDK internalization. Interacts with HDGF (isoform 1). Interacts with ALKBH2. Interacts with IGFBP5; this interaction is necessary for IGFBP5 localization to the nucleus. Interacts with DDX24 (when ubiquitinated); this interaction may be important during ribosome biogenesis. Some glutamate residues are glycylated by TTLL8. This modification occurs exclusively on glutamate residues and results in a glycine chain on the gamma-carboxyl group. Post-translationally, symmetrically methylated by PRMT5.

The protein resides in the nucleus. It is found in the nucleolus. It localises to the cytoplasm. Functionally, nucleolin is the major nucleolar protein of growing eukaryotic cells. It is found associated with intranucleolar chromatin and pre-ribosomal particles. It induces chromatin decondensation by binding to histone H1. It is thought to play a role in pre-rRNA transcription and ribosome assembly. May play a role in the process of transcriptional elongation. Binds RNA oligonucleotides with 5'-UUAGGG-3' repeats more tightly than the telomeric single-stranded DNA 5'-TTAGGG-3' repeats. The sequence is that of Nucleolin (NCL) from Homo sapiens (Human).